A 266-amino-acid chain; its full sequence is BTB/POZ domain-containing protein KCTD2 (266 aa).

The residue at position 2 (Ala2) is an N-acetylalanine. Residues 38–79 (GRHPADTAASPPPPRTAGARARTSGADGRRRGRPLGPAQRGR) are disordered. A compositionally biased stretch (low complexity) spans 53–63 (TAGARARTSGA). The BTB domain occupies 76 to 174 (QRGRYLLRDT…LVKERIRDNE (99 aa)).

This is BTB/POZ domain-containing protein KCTD2 (Kctd2) from Mus musculus (Mouse).